Here is a 344-residue protein sequence, read N- to C-terminus: S-methyl-5'-thioadenosine phosphorylase (344 aa).

Phosphate-binding positions include Thr-45, 88 to 89 (RH), and 121 to 122 (SA). Residue Met-238 coordinates substrate. Ser-239 is a binding site for phosphate. Position 262 to 264 (262 to 264 (DYD)) interacts with substrate.

It belongs to the PNP/MTAP phosphorylase family. MTAP subfamily. As to quaternary structure, homotrimer.

The protein localises to the cytoplasm. The protein resides in the nucleus. The catalysed reaction is S-methyl-5'-thioadenosine + phosphate = 5-(methylsulfanyl)-alpha-D-ribose 1-phosphate + adenine. It functions in the pathway amino-acid biosynthesis; L-methionine biosynthesis via salvage pathway; S-methyl-5-thio-alpha-D-ribose 1-phosphate from S-methyl-5'-thioadenosine (phosphorylase route): step 1/1. Catalyzes the reversible phosphorylation of S-methyl-5'-thioadenosine (MTA) to adenine and 5-methylthioribose-1-phosphate. Involved in the breakdown of MTA, a major by-product of polyamine biosynthesis. Responsible for the first step in the methionine salvage pathway after MTA has been generated from S-adenosylmethionine. Has broad substrate specificity with 6-aminopurine nucleosides as preferred substrates. This is S-methyl-5'-thioadenosine phosphorylase from Candida albicans (strain WO-1) (Yeast).